The primary structure comprises 256 residues: tRNA pseudouridine synthase A (256 aa).

The active-site Nucleophile is aspartate 52. Tyrosine 110 serves as a coordination point for substrate.

This sequence belongs to the tRNA pseudouridine synthase TruA family. As to quaternary structure, homodimer.

The catalysed reaction is uridine(38/39/40) in tRNA = pseudouridine(38/39/40) in tRNA. In terms of biological role, formation of pseudouridine at positions 38, 39 and 40 in the anticodon stem and loop of transfer RNAs. This chain is tRNA pseudouridine synthase A, found in Stenotrophomonas maltophilia (strain K279a).